We begin with the raw amino-acid sequence, 479 residues long: Glucan 1,3-beta-glucosidase 2 (479 aa).

An N-terminal signal peptide occupies residues 1–21 (MMLFLIHLMALCCMFVAEVAC). N-linked (GlcNAc...) asparagine glycosylation is found at Asn25, Asn29, Asn63, Asn104, Asn187, and Asn193. Glu227 (proton donor) is an active-site residue. N-linked (GlcNAc...) asparagine glycosylation is found at Asn254, Asn285, and Asn288. The Nucleophile role is filled by His306. Asn318 and Asn451 each carry an N-linked (GlcNAc...) asparagine glycan. Ser456 carries GPI-anchor amidated serine lipidation. Residues 457–479 (SASAIASNKMTLLLAFLLVILVI) constitute a propeptide, removed in mature form.

It belongs to the glycosyl hydrolase 5 (cellulase A) family. Predicted to be a substrate for cleavage by KEX2.

The protein localises to the cell membrane. Its subcellular location is the secreted. The enzyme catalyses Successive hydrolysis of beta-D-glucose units from the non-reducing ends of (1-&gt;3)-beta-D-glucans, releasing alpha-glucose.. Beta-glucanases participate in the metabolism of beta-glucan, the main structural component of the cell wall. EXG2 is not heavily involved in the exoglucanase function of the adhesion process. This chain is Glucan 1,3-beta-glucosidase 2 (EXG2), found in Candida albicans (strain SC5314 / ATCC MYA-2876) (Yeast).